We begin with the raw amino-acid sequence, 555 residues long: Energy-dependent translational throttle protein EttA (555 aa).

ABC transporter domains follow at residues 6–259 (YTMH…AQEA) and 324–550 (LEVS…RIKY). An ATP-binding site is contributed by 39 to 46 (GLNGAGKS). The interval 95-139 (SEVVNALKRLDEVYALYADPDADFDKLAAEQGRLEEIIQAHDGHN) is arm. Positions 242-322 (GNYSSWLEQK…IPPGPRLGDK (81 aa)) are ptIM. Residue 356–363 (GPNGAGKS) coordinates ATP.

The protein belongs to the ABC transporter superfamily. ABCF family. Translational throttle EttA subfamily. In terms of assembly, monomer. Probably contacts ribosomal proteins L1, L5, L33 and S7, the 16S and 23S rRNA and the P-site containing tRNA(fMet).

The protein localises to the cytoplasm. It catalyses the reaction ATP + H2O = ADP + phosphate + H(+). Its function is as follows. A translation factor that gates the progression of the 70S ribosomal initiation complex (IC, containing tRNA(fMet) in the P-site) into the translation elongation cycle by using a mechanism sensitive to the ATP/ADP ratio. Binds to the 70S ribosome E-site where it modulates the state of the translating ribosome during subunit translocation. ATP hydrolysis probably frees it from the ribosome, which can enter the elongation phase. The sequence is that of Energy-dependent translational throttle protein EttA from Escherichia coli O157:H7.